Consider the following 459-residue polypeptide: Cysteine--tRNA ligase (459 aa).

Residue cysteine 28 participates in Zn(2+) binding. Residues 30-40 carry the 'HIGH' region motif; that stretch reads VTVYDLCHFGH. Cysteine 209, histidine 234, and glutamate 238 together coordinate Zn(2+). A 'KMSKS' region motif is present at residues 266–270; it reads KMSKS. An ATP-binding site is contributed by lysine 269.

This sequence belongs to the class-I aminoacyl-tRNA synthetase family. Monomer. Zn(2+) serves as cofactor.

It localises to the cytoplasm. It carries out the reaction tRNA(Cys) + L-cysteine + ATP = L-cysteinyl-tRNA(Cys) + AMP + diphosphate. This chain is Cysteine--tRNA ligase, found in Actinobacillus succinogenes (strain ATCC 55618 / DSM 22257 / CCUG 43843 / 130Z).